A 54-amino-acid chain; its full sequence is Large ribosomal subunit protein bL32c (54 aa).

The protein belongs to the bacterial ribosomal protein bL32 family.

The protein localises to the plastid. The protein resides in the chloroplast. The protein is Large ribosomal subunit protein bL32c of Gossypium barbadense (Sea Island cotton).